A 305-amino-acid polypeptide reads, in one-letter code: Phosphatidylglycerol--prolipoprotein diacylglyceryl transferase (305 aa).

The next 3 helical transmembrane spans lie at 10–30 (FLIS…GAII), 59–79 (LMLG…AFEW), and 92–112 (LTTG…STVI). Arg140 is a binding site for a 1,2-diacyl-sn-glycero-3-phospho-(1'-sn-glycerol). 2 helical membrane-spanning segments follow: residues 182–202 (LFHP…GILL) and 260–280 (IRVA…LIFL).

It belongs to the Lgt family.

It is found in the cell membrane. The catalysed reaction is L-cysteinyl-[prolipoprotein] + a 1,2-diacyl-sn-glycero-3-phospho-(1'-sn-glycerol) = an S-1,2-diacyl-sn-glyceryl-L-cysteinyl-[prolipoprotein] + sn-glycerol 1-phosphate + H(+). Its pathway is protein modification; lipoprotein biosynthesis (diacylglyceryl transfer). Catalyzes the transfer of the diacylglyceryl group from phosphatidylglycerol to the sulfhydryl group of the N-terminal cysteine of a prolipoprotein, the first step in the formation of mature lipoproteins. This is Phosphatidylglycerol--prolipoprotein diacylglyceryl transferase from Chloroflexus aggregans (strain MD-66 / DSM 9485).